Reading from the N-terminus, the 289-residue chain is Proteasome assembly chaperone 1 (289 aa).

Positions 1 to 38 (MAATFFGEVVKAPCRAGTEEEEEEEEQSRRDTPEDREV) are disordered. N-acetylalanine is present on alanine 2. Threonine 18 carries the phosphothreonine modification. Residues 27-38 (QSRRDTPEDREV) show a composition bias toward basic and acidic residues. At threonine 55 the chain carries Phosphothreonine. Serine 181 carries the phosphoserine modification. N6-acetyllysine is present on lysine 265.

It belongs to the PSMG1 family. In terms of assembly, forms a heterodimer with PSMG2. The PSMG1-PSMG2 heterodimer interacts directly with the PSMA5 and PSMA7 proteasome alpha subunits. In terms of processing, degraded by the proteasome upon completion of 20S proteasome maturation. As to expression, highly expressed in testis with moderate expression in brain, liver and kidney and low levels in heart, skeletal muscle and pancreas.

Its subcellular location is the cytoplasm. It is found in the endoplasmic reticulum. Its function is as follows. Chaperone protein which promotes assembly of the 20S proteasome as part of a heterodimer with PSMG2. The PSMG1-PSMG2 heterodimer binds to the PSMA5 and PSMA7 proteasome subunits, promotes assembly of the proteasome alpha subunits into the heteroheptameric alpha ring and prevents alpha ring dimerization. The polypeptide is Proteasome assembly chaperone 1 (Mus musculus (Mouse)).